Here is a 315-residue protein sequence, read N- to C-terminus: Hydroxysteroid 11-beta-dehydrogenase 1-like protein (315 aa).

An N-terminal signal peptide occupies residues 1-15 (MKVLLLTGLGALFFA). NADP(+) is bound by residues 36–62 (GANA…TAHT), 87–88 (DM), and 114–116 (NHI). Ser165 lines the substrate pocket. The active-site Proton acceptor is the Tyr178. Residues 178-182 (YSAAK) and 211-217 (GLRDRAS) contribute to the NADP(+) site. Residues 221–286 (AVRSSTSRPR…SKTEKNDGHL (66 aa)) form a disordered region. Over residues 277 to 286 (SKTEKNDGHL) the composition is skewed to basic and acidic residues.

It belongs to the short-chain dehydrogenases/reductases (SDR) family. In terms of tissue distribution, highly expressed in the brain.

It localises to the secreted. It carries out the reaction cortisone + NADPH + H(+) = cortisol + NADP(+). In terms of biological role, unidirectional NADP(+)-dependent cortisol dehydrogenase (in vitro). The chain is Hydroxysteroid 11-beta-dehydrogenase 1-like protein (HSD11B1L) from Homo sapiens (Human).